Reading from the N-terminus, the 874-residue chain is Alanine--tRNA ligase (874 aa).

Positions 562, 566, 665, and 669 each coordinate Zn(2+).

It belongs to the class-II aminoacyl-tRNA synthetase family. It depends on Zn(2+) as a cofactor.

The protein resides in the cytoplasm. The catalysed reaction is tRNA(Ala) + L-alanine + ATP = L-alanyl-tRNA(Ala) + AMP + diphosphate. In terms of biological role, catalyzes the attachment of alanine to tRNA(Ala) in a two-step reaction: alanine is first activated by ATP to form Ala-AMP and then transferred to the acceptor end of tRNA(Ala). Also edits incorrectly charged Ser-tRNA(Ala) and Gly-tRNA(Ala) via its editing domain. This chain is Alanine--tRNA ligase, found in Pseudomonas putida (strain ATCC 700007 / DSM 6899 / JCM 31910 / BCRC 17059 / LMG 24140 / F1).